The sequence spans 635 residues: Protein phosphatase PP2A regulatory subunit A (635 aa).

Residues 1–27 show a composition bias toward low complexity; it reads MSGARSTTAGAVPSAATTSTTSTTSNS. The segment at 1–33 is disordered; that stretch reads MSGARSTTAGAVPSAATTSTTSTTSNSKDSDSN. HEAT repeat units lie at residues 34–72, 73–111, 112–150, 151–189, 190–228, 229–273, 274–316, 317–356, 357–395, 396–434, 435–473, 474–512, 513–553, 554–598, and 599–632; these read ESLYPLALLMDELKHDDIANRVEAMKKLDTIALALGPER, TRNELIPFLTEVAQDDEDEVFAVLAEQLGKFVPYIGGPQ, YATILLPVLEILASAEETLVREKAVDSLNNVAQELSQEQ, LFSDFVPLIEHLATADWFSSKVSACGLFKSVIVRIKDDS, LRKNILALYLQLAQDDTPMVKRAVGKNLPILIDLLTQNL, GLST…NAKG, DESH…SNQA, YIDELVQPFLNLCEDNEGDVREAVAKQVSGFAKFLNDPSI, ILNKILPAVQNLSMDESETVRSALASKITNIVLLLNKDQ, VINNFLPILLNMLRDEFPDVRLNIIASLKVVNDVIGIEL, LSDSLLPAITELAKDVNWRVRMAIIEYIPILAEQLGMQF, FDQQLSDLCLSWLWDTVYSIREAAVNNLKRLTEIFGSDW, CRDE…SLDV, VTEQ…YDAL, and IKNTILPSLQTLCQDEDVDVKYFAKKSLAECQEL.

The protein belongs to the phosphatase 2A regulatory subunit A family. As to quaternary structure, PP2A exists in several trimeric forms, all of which consist of a core composed of a catalytic subunit associated with a 65 kDa regulatory subunit (PR65) (subunit A). The core complex associates with a third, variable subunit (subunit B), which confers distinct properties to the holoenzyme.

Its function is as follows. Phosphatase 2A affects a variety of biological processes in the cell such as transcription, cell cycle progression and cellular morphogenesis, and provides an initial identification of critical substrates for this phosphatase. The regulatory subunit may direct the catalytic subunit to distinct, albeit overlapping, subsets of substrates. The chain is Protein phosphatase PP2A regulatory subunit A (TPD3) from Saccharomyces cerevisiae (strain ATCC 204508 / S288c) (Baker's yeast).